Reading from the N-terminus, the 428-residue chain is Gamma-glutamyl phosphate reductase (428 aa).

The protein belongs to the gamma-glutamyl phosphate reductase family.

It localises to the cytoplasm. The enzyme catalyses L-glutamate 5-semialdehyde + phosphate + NADP(+) = L-glutamyl 5-phosphate + NADPH + H(+). Its pathway is amino-acid biosynthesis; L-proline biosynthesis; L-glutamate 5-semialdehyde from L-glutamate: step 2/2. Functionally, catalyzes the NADPH-dependent reduction of L-glutamate 5-phosphate into L-glutamate 5-semialdehyde and phosphate. The product spontaneously undergoes cyclization to form 1-pyrroline-5-carboxylate. The protein is Gamma-glutamyl phosphate reductase of Zymomonas mobilis subsp. mobilis (strain ATCC 31821 / ZM4 / CP4).